A 343-amino-acid chain; its full sequence is Heme A synthase (343 aa).

The next 8 membrane-spanning stretches (helical) occupy residues 13–33, 96–116, 130–150, 165–185, 197–217, 258–278, 290–310, and 311–331; these read VALW…VGGA, HRLL…FFLI, VLLG…SSGL, LGLA…AWAG, GWAL…ALVA, LHHR…GVAA, LTAF…IWTL, and MTAV…ILLA. His-260 serves as a coordination point for heme. His-322 serves as a coordination point for heme.

It belongs to the COX15/CtaA family. Type 2 subfamily. In terms of assembly, interacts with CtaB. Requires heme b as cofactor.

The protein localises to the cell membrane. The catalysed reaction is Fe(II)-heme o + 2 A + H2O = Fe(II)-heme a + 2 AH2. The protein operates within porphyrin-containing compound metabolism; heme A biosynthesis; heme A from heme O: step 1/1. In terms of biological role, catalyzes the conversion of heme O to heme A by two successive hydroxylations of the methyl group at C8. The first hydroxylation forms heme I, the second hydroxylation results in an unstable dihydroxymethyl group, which spontaneously dehydrates, resulting in the formyl group of heme A. The protein is Heme A synthase of Caulobacter sp. (strain K31).